We begin with the raw amino-acid sequence, 572 residues long: Urease subunit alpha (572 aa).

A Urease domain is found at 134 to 572; sequence AGIDTHIHLI…AAMNQLYFFG (439 aa). The Ni(2+) site is built by His-139, His-141, and Lys-222. The residue at position 222 (Lys-222) is an N6-carboxylysine. A substrate-binding site is contributed by His-224. Ni(2+)-binding residues include His-251 and His-277. His-325 serves as the catalytic Proton donor. Residue Asp-365 participates in Ni(2+) binding.

Belongs to the metallo-dependent hydrolases superfamily. Urease alpha subunit family. In terms of assembly, heterotrimer of UreA (gamma), UreB (beta) and UreC (alpha) subunits. Three heterotrimers associate to form the active enzyme. It depends on Ni cation as a cofactor. Post-translationally, carboxylation allows a single lysine to coordinate two nickel ions.

Its subcellular location is the cytoplasm. The catalysed reaction is urea + 2 H2O + H(+) = hydrogencarbonate + 2 NH4(+). It participates in nitrogen metabolism; urea degradation; CO(2) and NH(3) from urea (urease route): step 1/1. In Edwardsiella ictaluri (strain 93-146), this protein is Urease subunit alpha.